The chain runs to 878 residues: Serine/threonine-protein kinase N3 (878 aa).

3 REM-1 domains span residues 2–77 (EHRK…QVLL), 86–165 (SEPQ…SGSP), and 169–238 (PDLL…RLPP). Ser-164 is modified (phosphoserine). Positions 461 to 525 (PNTASPPKGR…TPCTKRPHMD (65 aa)) are disordered. The region spanning 548–807 (FRCLAVLGRG…AEEIKVQPFF (260 aa)) is the Protein kinase domain. Residues 554–562 (LGRGHFGKV) and Lys-577 each bind ATP. The active-site Proton acceptor is the Asp-673. Phosphothreonine occurs at positions 707, 711, and 849. The AGC-kinase C-terminal domain occupies 808 to 878 (RTTNWQALLA…DFVSEQFLES (71 aa)).

This sequence belongs to the protein kinase superfamily. AGC Ser/Thr protein kinase family. PKC subfamily. Post-translationally, autophosphorylated.

It localises to the nucleus. It is found in the cytoplasm. Its subcellular location is the perinuclear region. The enzyme catalyses L-seryl-[protein] + ATP = O-phospho-L-seryl-[protein] + ADP + H(+). It carries out the reaction L-threonyl-[protein] + ATP = O-phospho-L-threonyl-[protein] + ADP + H(+). Its activity is regulated as follows. Two specific sites, Thr-707 (activation loop of the kinase domain) and Thr-849 (turn motif), need to be phosphorylated for its full activation. In terms of biological role, contributes to invasiveness in malignant prostate cancer. This is Serine/threonine-protein kinase N3 (Pkn3) from Mus musculus (Mouse).